Reading from the N-terminus, the 171-residue chain is ATP synthase subunit delta (171 aa).

Belongs to the ATPase delta chain family. As to quaternary structure, F-type ATPases have 2 components, F(1) - the catalytic core - and F(0) - the membrane proton channel. F(1) has five subunits: alpha(3), beta(3), gamma(1), delta(1), epsilon(1). F(0) has three main subunits: a(1), b(2) and c(10-14). The alpha and beta chains form an alternating ring which encloses part of the gamma chain. F(1) is attached to F(0) by a central stalk formed by the gamma and epsilon chains, while a peripheral stalk is formed by the delta and b chains.

It localises to the cell membrane. F(1)F(0) ATP synthase produces ATP from ADP in the presence of a proton or sodium gradient. F-type ATPases consist of two structural domains, F(1) containing the extramembraneous catalytic core and F(0) containing the membrane proton channel, linked together by a central stalk and a peripheral stalk. During catalysis, ATP synthesis in the catalytic domain of F(1) is coupled via a rotary mechanism of the central stalk subunits to proton translocation. Its function is as follows. This protein is part of the stalk that links CF(0) to CF(1). It either transmits conformational changes from CF(0) to CF(1) or is implicated in proton conduction. The polypeptide is ATP synthase subunit delta (Acholeplasma laidlawii (strain PG-8A)).